Here is a 643-residue protein sequence, read N- to C-terminus: Pseudouridylate synthase PUS7L (643 aa).

The active-site Nucleophile is Asp-284. The TRUD domain maps to 370–597 (GFVNYYGPQR…PGCYRPLLAK (228 aa)).

It belongs to the pseudouridine synthase TruD family.

It carries out the reaction a uridine in mRNA = a pseudouridine in mRNA. Its function is as follows. Pseudouridine synthase that catalyzes pseudouridylation of mRNAs. The polypeptide is Pseudouridylate synthase PUS7L (pus7l) (Danio rerio (Zebrafish)).